The sequence spans 184 residues: Large ribosomal subunit protein bL9 (184 aa).

The tract at residues 160–184 (LQNQKSEQQEAEQDANKEAADGDDS) is disordered. Residues 173–184 (DANKEAADGDDS) are compositionally biased toward basic and acidic residues.

It belongs to the bacterial ribosomal protein bL9 family.

Its function is as follows. Binds to the 23S rRNA. The chain is Large ribosomal subunit protein bL9 from Wolbachia sp. subsp. Drosophila simulans (strain wRi).